The chain runs to 291 residues: Acetyl-coenzyme A carboxylase carboxyl transferase subunit beta (291 aa).

The region spanning 36 to 291 (MWVKCDGCGK…KILVIHGRGN (256 aa)) is the CoA carboxyltransferase N-terminal domain. Positions 40, 43, 59, and 62 each coordinate Zn(2+). A C4-type zinc finger spans residues 40–62 (CDGCGKVLYKNDMEKNNKVCYHC).

Belongs to the AccD/PCCB family. As to quaternary structure, acetyl-CoA carboxylase is a heterohexamer composed of biotin carboxyl carrier protein (AccB), biotin carboxylase (AccC) and two subunits each of ACCase subunit alpha (AccA) and ACCase subunit beta (AccD). It depends on Zn(2+) as a cofactor.

The protein resides in the cytoplasm. The catalysed reaction is N(6)-carboxybiotinyl-L-lysyl-[protein] + acetyl-CoA = N(6)-biotinyl-L-lysyl-[protein] + malonyl-CoA. Its pathway is lipid metabolism; malonyl-CoA biosynthesis; malonyl-CoA from acetyl-CoA: step 1/1. Its function is as follows. Component of the acetyl coenzyme A carboxylase (ACC) complex. Biotin carboxylase (BC) catalyzes the carboxylation of biotin on its carrier protein (BCCP) and then the CO(2) group is transferred by the transcarboxylase to acetyl-CoA to form malonyl-CoA. The polypeptide is Acetyl-coenzyme A carboxylase carboxyl transferase subunit beta (Clostridium kluyveri (strain NBRC 12016)).